The primary structure comprises 185 residues: MINNIRQDAEVRMEKCLETFKNNISKLRTGRANPNLLDNIKVDYYGSIMPLRQLANIIVEDTRTLVITLFDQSIIKRVEKAIIISDLGLTPDLSGTIIRVQLPSLTEERRRNLIKIVRNEAEQGKISVRNIRRDANDHIKILLKNKAISIDEERRSQSEIQKITEAWIRRLDQILSEKERELIDF.

Belongs to the RRF family.

Its subcellular location is the cytoplasm. Responsible for the release of ribosomes from messenger RNA at the termination of protein biosynthesis. May increase the efficiency of translation by recycling ribosomes from one round of translation to another. This chain is Ribosome-recycling factor, found in Baumannia cicadellinicola subsp. Homalodisca coagulata.